A 41-amino-acid polypeptide reads, in one-letter code: Histone H3.2 (41 aa).

Positions 1 to 41 are disordered; that stretch reads MARTKQTARKSTGAKAPRKQLASKAARKSAPATGGIKKPHR.

Belongs to the histone H3 family. In terms of assembly, the nucleosome is a histone octamer containing two molecules each of H2A, H2B, H3 and H4 assembled in one H3-H4 heterotetramer and two H2A-H2B heterodimers. The octamer wraps approximately 147 bp of DNA.

It is found in the nucleus. The protein localises to the chromosome. In terms of biological role, core component of nucleosome. Nucleosomes wrap and compact DNA into chromatin, limiting DNA accessibility to the cellular machineries which require DNA as a template. Histones thereby play a central role in transcription regulation, DNA repair, DNA replication and chromosomal stability. DNA accessibility is regulated via a complex set of post-translational modifications of histones, also called histone code, and nucleosome remodeling. This is Histone H3.2 from Tetrahymena australis.